Reading from the N-terminus, the 327-residue chain is Vacuolar protein sorting-associated protein 26A (327 aa).

The disordered stretch occupies residues 306-327; it reads RTNFHQRFESPESQASAEQPEM. A Phosphoserine modification is found at Ser-315. Over residues 316–327 the composition is skewed to polar residues; it reads PESQASAEQPEM.

The protein belongs to the VPS26 family. As to quaternary structure, component of the heterotrimeric retromer cargo-selective complex (CSC), also described as vacuolar protein sorting subcomplex (VPS), formed by VPS26 (VPS26A or VPS26B), VPS29 and VPS35. The CSC has a highly elongated structure with VPS26 and VPS29 binding independently at opposite distal ends of VPS35 as central platform. The CSC is believed to associate with variable sorting nexins to form functionally distinct retromer complex variants. The originally described retromer complex (also called SNX-BAR retromer) is a pentamer containing the CSC and a heterodimeric membrane-deforming subcomplex formed between SNX1 or SNX2 and SNX5 or SNX6 (also called SNX-BAR subcomplex); the respective CSC and SNX-BAR subcomplexes associate with low affinity. The CSC associates with SNX3 to form a SNX3-retromer complex. The CSC associates with SNX27, the WASH complex and the SNX-BAR subcomplex to form the SNX27-retromer complex. Interacts with VPS29, VPS35, SNX27, SNX1, SNX2, SNX5, SNX6, SNX3, RAB7A, ECPAS, EHD1, WASHC5, SORL1.

Its subcellular location is the cytoplasm. The protein resides in the endosome membrane. It is found in the early endosome. In terms of biological role, acts as a component of the retromer cargo-selective complex (CSC). The CSC is believed to be the core functional component of retromer or respective retromer complex variants acting to prevent missorting of selected transmembrane cargo proteins into the lysosomal degradation pathway. The recruitment of the CSC to the endosomal membrane involves RAB7A and SNX3. The SNX-BAR retromer mediates retrograde transport of cargo proteins from endosomes to the trans-Golgi network (TGN) and is involved in endosome-to-plasma membrane transport for cargo protein recycling. The SNX3-retromer mediates the retrograde endosome-to-TGN transport of WLS distinct from the SNX-BAR retromer pathway. The SNX27-retromer is believed to be involved in endosome-to-plasma membrane trafficking and recycling of a broad spectrum of cargo proteins. The CSC complex seems to act as recruitment hub for other proteins, such as the WASH complex and TBC1D5. Required for retrograde transport of lysosomal enzyme receptor IGF2R. Required to regulate transcytosis of the polymeric immunoglobulin receptor (pIgR-pIgA). Required for the endosomal localization of WASHC2 (indicative for the WASH complex). Required for the endosomal localization of TBC1D5. Mediates retromer cargo recognition of SORL1 and is involved in trafficking of SORL1 implicated in sorting and processing of APP. Involved in retromer-independent lysosomal sorting of F2R. Involved in recycling of ADRB2. Acts redundantly with VSP26B in SNX-27 mediated endocytic recycling of SLC2A1/GLUT1. Enhances the affinity of SNX27 for PDZ-binding motifs in cargo proteins. The sequence is that of Vacuolar protein sorting-associated protein 26A (VPS26A) from Bos taurus (Bovine).